Here is a 1953-residue protein sequence, read N- to C-terminus: Protein BNI1 (1953 aa).

Disordered regions lie at residues 1–152 (MLKN…ASSL), 230–258 (MRANTTSSSTASRTSMASDHHPILTANSS), 263–282 (KSVLMTSASSPTSTVYSNSL), and 287–306 (TLSSVGTSTSKGKKLVSGSL). Residues 31-40 (ANSNATNSNT) are compositionally biased toward low complexity. Composition is skewed to polar residues over residues 41–100 (GSPT…SQYM) and 110–143 (VSSQHARSHSMQSKYSYSKRNSSQASNKLTRQHT). A GBD/FH3 domain is found at 174 to 696 (EMPSDPYEVE…NVSVASTSDE (523 aa)). The segment covering 232–246 (ANTTSSSTASRTSMA) has biased composition (low complexity). Residues 263–278 (KSVLMTSASSPTSTVY) show a composition bias toward polar residues. A phosphoserine mark is found at S311 and S325. The disordered stretch occupies residues 312–337 (LNNIYRGGAENNTSASTLPGDRTNRP). Coiled-coil stretches lie at residues 712–807 (QTDE…TILN), 864–894 (NKRLKMLRMQMENIENEARQLEMTNFAEFEK), and 928–981 (NKLN…YKGF). Disordered regions lie at residues 990–1014 (IMDSPKKNTGDVETEEDANYASLDP), 1040–1094 (HEIQ…LDAL), and 1149–1330 (TQKV…MPAS). The FH1 domain occupies 1053–1337 (SSSSSDDESE…PASQIKSAVT (285 aa)). S1085 and S1170 each carry phosphoserine. Residues 1184-1211 (DKAEKDMRQHVENGKQGRVVNHEEDKTA) show a composition bias toward basic and acidic residues. The segment covering 1217 to 1237 (SKLNNTDGAEDLSTQSSVLSS) has biased composition (polar residues). Residues 1238–1250 (QPPPPPPPPPPVP) are compositionally biased toward pro residues. Basic and acidic residues predominate over residues 1257–1270 (SLEKEKKSEDDTVK). The segment covering 1278 to 1292 (PAPPPPPPPPPPPPM) has biased composition (pro residues). S1338 and S1344 each carry phosphoserine. In terms of domain architecture, FH2 spans 1348–1766 (FEKYPRPHKK…YIKHKKIVEE (419 aa)). A coiled-coil region spans residues 1732–1811 (KFADFINEYK…DKLLEQLKNA (80 aa)). Residues 1768-1779 (QKRAQEKEKQKE) show a composition bias toward basic and acidic residues. Disordered regions lie at residues 1768–1797 (QKRAQEKEKQKENSNSPSSEGNEEDEAEDR), 1809–1844 (KNAGPAKSDPSSARKRALVRKKYLSEKDNAPQLLND), and 1872–1899 (PTPLATRGVMNTSEDLPSPSKTSALEDQ). The region spanning 1792–1826 (DEAEDRRAVMDKLLEQLKNAGPAKSDPSSARKRAL) is the DAD domain. Positions 1821–1830 (ARKRALVRKK) are enriched in basic residues. A compositionally biased stretch (polar residues) spans 1880–1896 (VMNTSEDLPSPSKTSAL). Residue T1918 is modified to Phosphothreonine.

Belongs to the formin homology family. BNI1 subfamily. In terms of assembly, homodimer, and possibly also homotetramer. Interacts with PFY1 via the FH1 domain and with actin via the FH2 domain.

The protein localises to the cell membrane. Its subcellular location is the cell projection. It is found in the ruffle membrane. The protein resides in the cytoplasm. It localises to the cytoskeleton. Functionally, required for the assembly of F-actin structures, such as actin cables and stress fibers. Nucleates actin filaments. Binds to the barbed end of the actin filament and acts as a leaky capper, slowing both polymerization and depolymerization. Protects the growing actin fiber from tight capping proteins and so increases the time of elongation and the total amount of F-actin. May organize microtubules by mediating spindle positioning and movement in the budding process. Potential target of the RHO family members. The sequence is that of Protein BNI1 (BNI1) from Saccharomyces cerevisiae (strain ATCC 204508 / S288c) (Baker's yeast).